The following is a 420-amino-acid chain: RING finger protein 39 (420 aa).

An RING-type zinc finger spans residues 88 to 135; the sequence is CPLCGGSFEDPVLLACEHSFCRACLARRWGTPPATGTEASPTACPCCG. In terms of domain architecture, B30.2/SPRY spans 210 to 420; it reads DDLPEDYPVV…APLRIVPAES (211 aa).

Expressed in testis.

The protein localises to the cytoplasm. It carries out the reaction S-ubiquitinyl-[E2 ubiquitin-conjugating enzyme]-L-cysteine + [acceptor protein]-L-lysine = [E2 ubiquitin-conjugating enzyme]-L-cysteine + N(6)-ubiquitinyl-[acceptor protein]-L-lysine.. It participates in protein modification; protein ubiquitination. In terms of biological role, plays an inhibitory role in anti-RNA viral innate immunity by targeting the adapter DDX3X and promoting its 'Lys-48'-linked polyubiquitination. Alternatively, enhances the cGAS-STING pathway activation by promoting 'Lys-63'-linked ubiquitination of STING1, facilitating the STING1-TBK1 complex formation and STING1 activation. Functionally, (Microbial infection) Plays a positive role in human immunodeficiency virus (HIV-1) replication. In Homo sapiens (Human), this protein is RING finger protein 39 (RNF39).